Consider the following 621-residue polypeptide: Phosphoenolpyruvate carboxykinase [GTP] (621 aa).

Substrate is bound by residues Arg-83 and Tyr-217–Gly-219. Mn(2+) is bound by residues Lys-226 and His-245. Substrate is bound at residue Ser-267. Met-268–Ser-273 is a GTP binding site. Residue Cys-269 is part of the active site. Residue Asp-286 participates in Mn(2+) binding. Position 381–383 (Asn-381–Arg-383) interacts with substrate. Positions 383 and 415 each coordinate GTP.

This sequence belongs to the phosphoenolpyruvate carboxykinase [GTP] family. Requires Mn(2+) as cofactor.

It is found in the cytoplasm. The enzyme catalyses oxaloacetate + GTP = phosphoenolpyruvate + GDP + CO2. It participates in carbohydrate biosynthesis; gluconeogenesis. Functionally, catalyzes the conversion of oxaloacetate (OAA) to phosphoenolpyruvate (PEP), the rate-limiting step in the metabolic pathway that produces glucose from lactate and other precursors derived from the citric acid cycle. The protein is Phosphoenolpyruvate carboxykinase [GTP] of Pyrococcus horikoshii (strain ATCC 700860 / DSM 12428 / JCM 9974 / NBRC 100139 / OT-3).